The sequence spans 366 residues: S-adenosylmethionine:tRNA ribosyltransferase-isomerase (366 aa).

Belongs to the QueA family. Monomer.

Its subcellular location is the cytoplasm. It carries out the reaction 7-aminomethyl-7-carbaguanosine(34) in tRNA + S-adenosyl-L-methionine = epoxyqueuosine(34) in tRNA + adenine + L-methionine + 2 H(+). It functions in the pathway tRNA modification; tRNA-queuosine biosynthesis. Its function is as follows. Transfers and isomerizes the ribose moiety from AdoMet to the 7-aminomethyl group of 7-deazaguanine (preQ1-tRNA) to give epoxyqueuosine (oQ-tRNA). In Synechococcus sp. (strain CC9605), this protein is S-adenosylmethionine:tRNA ribosyltransferase-isomerase.